Reading from the N-terminus, the 331-residue chain is Adenosine deaminase (331 aa).

Zn(2+)-binding residues include His-12 and His-14. The substrate site is built by His-14, Asp-16, and Gly-170. A Zn(2+)-binding site is contributed by His-197. The Proton donor role is filled by Glu-200. Position 278 (Asp-278) interacts with Zn(2+). Asp-279 contributes to the substrate binding site.

The protein belongs to the metallo-dependent hydrolases superfamily. Adenosine and AMP deaminases family. Adenosine deaminase subfamily. Requires Zn(2+) as cofactor.

It carries out the reaction adenosine + H2O + H(+) = inosine + NH4(+). The enzyme catalyses 2'-deoxyadenosine + H2O + H(+) = 2'-deoxyinosine + NH4(+). Catalyzes the hydrolytic deamination of adenosine and 2-deoxyadenosine. This is Adenosine deaminase from Shewanella baltica (strain OS185).